We begin with the raw amino-acid sequence, 466 residues long: Chromogranin-A (466 aa).

An N-terminal signal peptide occupies residues 1-18 (MRSSAALALLLCAGQVFA). The cysteines at positions 35 and 56 are disulfide-linked. Positions 91 to 443 (AQQQQQQQQQ…ANRRAEDQEL (353 aa)) are disordered. The segment covering 92–111 (QQQQQQQQQQQQQQQQQQQQ) has biased composition (low complexity). Residue Ser114 is modified to Phosphoserine. The segment covering 131 to 155 (KHGDAASEAPSKDTVEKREDSDKGQ) has biased composition (basic and acidic residues). Over residues 177-213 (ESSMMGNSQSPGEDTANNTQSPTSLPSQEHGIPQTTE) the composition is skewed to polar residues. The residue at position 215 (Ser215) is a Phosphoserine. Positions 233 to 247 (KEEEEEEKEEEEEEK) are enriched in acidic residues. The segment covering 248–259 (EEKAIAREKAGP) has biased composition (basic and acidic residues). Phosphoserine occurs at positions 288 and 312. The segment covering 305 to 314 (GKGELEHSQQ) has biased composition (basic and acidic residues). Gly332 carries the post-translational modification Glycine amide. A compositionally biased stretch (basic and acidic residues) spans 351–378 (RLSREWEDKRWSRMDQLAKELTAEKRLE). Phosphoserine is present on residues Ser353 and Ser386. Met387 bears the Methionine sulfoxide mark. Residues 412 to 440 (SSREDSVEARGDFEEKKEEEGSANRRAED) show a composition bias toward basic and acidic residues. A phosphoserine mark is found at Ser413, Ser417, and Ser433. A glycan (O-linked (Xyl...) (chondroitin sulfate) serine) is linked at Ser433. Gln441 is subject to Pyrrolidone carboxylic acid. Residue Ser447 is modified to Phosphoserine.

It belongs to the chromogranin/secretogranin protein family. Self-interacts; self-assembly is promoted in vitro by chondroitin sulfate attachment which occurs at mildly acidic pH conditions. Interacts with SCG3; this interaction is optimal in conditions mimicking the lumenal milieu of the trans-Golgi network, i.e. pH 5.5 and 10 mM Ca(+2). Interacts with ITPR1 in the secretory granules. Post-translationally, O-glycosylated; contains chondroitin sulfate (CS). CS attachment is pH-dependent, being observed at mildly acidic conditions of pH 5 but not at neutral pH, and promotes self-assembly in vitro. Expressed in the brain and adrenal and pituitary glands.

It localises to the cytoplasmic vesicle. Its subcellular location is the secretory vesicle. It is found in the neuronal dense core vesicle. The protein resides in the secreted. Its function is as follows. Strongly inhibits glucose induced insulin release from the pancreas. In terms of biological role, catestatin inhibits catecholamine release from chromaffin cells and noradrenergic neurons by acting as a non-competitive nicotinic cholinergic antagonist. Can induce mast cell migration, degranulation and production of cytokines and chemokines. Functionally, serpinin regulates granule biogenesis in endocrine cells by up-regulating the transcription of protease nexin 1 (SERPINE2) via a cAMP-PKA-SP1 pathway. This leads to inhibition of granule protein degradation in the Golgi complex which in turn promotes granule formation. Serpinin and pGlu-serpinin can enhance both myocardial contractility (inotropy) and relaxation (lusitropy) and this cardio-stimulation requires a beta 1-adrenergic receptor/adenylate cyclase/cAMP/PKA pathway. This chain is Chromogranin-A (Chga), found in Rattus norvegicus (Rat).